The primary structure comprises 111 residues: Tubulin beta chain (111 aa).

The interval 82–111 (SEYQQYQDATAEDEGEFDEEEAEGEGQEYA) is disordered. The span at 91 to 111 (TAEDEGEFDEEEAEGEGQEYA) shows a compositional bias: acidic residues.

It belongs to the tubulin family. Dimer of alpha and beta chains. A typical microtubule is a hollow water-filled tube with an outer diameter of 25 nm and an inner diameter of 15 nM. Alpha-beta heterodimers associate head-to-tail to form protofilaments running lengthwise along the microtubule wall with the beta-tubulin subunit facing the microtubule plus end conferring a structural polarity. Microtubules usually have 13 protofilaments but different protofilament numbers can be found in some organisms and specialized cells. Mg(2+) is required as a cofactor.

The protein localises to the cytoplasm. The protein resides in the cytoskeleton. Functionally, tubulin is the major constituent of microtubules, a cylinder consisting of laterally associated linear protofilaments composed of alpha- and beta-tubulin heterodimers. Microtubules grow by the addition of GTP-tubulin dimers to the microtubule end, where a stabilizing cap forms. Below the cap, tubulin dimers are in GDP-bound state, owing to GTPase activity of alpha-tubulin. This Lymnaea stagnalis (Great pond snail) protein is Tubulin beta chain.